We begin with the raw amino-acid sequence, 351 residues long: D-alanine--D-alanine ligase (351 aa).

In terms of domain architecture, ATP-grasp spans 135 to 343 (NQIFLQSGQK…MEEVFSDLIE (209 aa)). Residue 167–222 (LETLGFPQFLKPVEGGSSVSVYKITNREQLKEKLALIFESDSKVMSQSFLTGIEVS) coordinates ATP. Residues D298, E310, and N312 each coordinate Mg(2+).

This sequence belongs to the D-alanine--D-alanine ligase family. Requires Mg(2+) as cofactor. It depends on Mn(2+) as a cofactor.

It localises to the cytoplasm. It carries out the reaction 2 D-alanine + ATP = D-alanyl-D-alanine + ADP + phosphate + H(+). Its pathway is cell wall biogenesis; peptidoglycan biosynthesis. In terms of biological role, cell wall formation. The polypeptide is D-alanine--D-alanine ligase (Leptospira interrogans serogroup Icterohaemorrhagiae serovar Lai (strain 56601)).